The primary structure comprises 566 residues: Arginine--tRNA ligase (566 aa).

The 'HIGH' region motif lies at 121–131; sequence ANPNGPFHIGH.

Belongs to the class-I aminoacyl-tRNA synthetase family.

The protein localises to the cytoplasm. The enzyme catalyses tRNA(Arg) + L-arginine + ATP = L-arginyl-tRNA(Arg) + AMP + diphosphate. This is Arginine--tRNA ligase from Methanococcus maripaludis (strain C6 / ATCC BAA-1332).